A 238-amino-acid polypeptide reads, in one-letter code: uncharacterized protein (238 aa).

5 consecutive transmembrane segments (helical) span residues 6–26, 45–65, 98–118, 160–180, and 186–206; these read METLIRLFVSILIICVLALMI, FILLYFCGFKYLILLLSFFIL, IPILFAILAIFGFNWALIGYI, IFGTLAGVLGAFLIGLFGYLL, and IVLCGTAGGIAGNLADSLVGA.

It belongs to the TMEM19 family.

Its subcellular location is the cell membrane. This is an uncharacterized protein from Methanocaldococcus jannaschii (strain ATCC 43067 / DSM 2661 / JAL-1 / JCM 10045 / NBRC 100440) (Methanococcus jannaschii).